The primary structure comprises 97 residues: Serine protease inhibitor Kazal-type 8 (97 aa).

The N-terminal stretch at 1–21 (MKGICSDAILVLATSMWMAFA) is a signal peptide. The Kazal-like domain occupies 36–96 (DKTIVECLKN…TKLYDGQCEN (61 aa)). 3 disulfide bridges follow: Cys42–Cys76, Cys49–Cys73, and Cys62–Cys94. An N-linked (GlcNAc...) asparagine glycan is attached at Asn85.

It localises to the secreted. Probable serine protease inhibitor. This Homo sapiens (Human) protein is Serine protease inhibitor Kazal-type 8 (SPINK8).